A 290-amino-acid chain; its full sequence is Diaminopimelate epimerase (290 aa).

Positions 17, 49, and 69 each coordinate substrate. Cysteine 78 acts as the Proton donor in catalysis. Residues 79–80, asparagine 166, asparagine 199, and 217–218 contribute to the substrate site; these read GN and ER. The active-site Proton acceptor is the cysteine 226. A substrate-binding site is contributed by 227–228; that stretch reads GS.

The protein belongs to the diaminopimelate epimerase family. Homodimer.

It localises to the cytoplasm. The catalysed reaction is (2S,6S)-2,6-diaminopimelate = meso-2,6-diaminopimelate. It functions in the pathway amino-acid biosynthesis; L-lysine biosynthesis via DAP pathway; DL-2,6-diaminopimelate from LL-2,6-diaminopimelate: step 1/1. Catalyzes the stereoinversion of LL-2,6-diaminopimelate (L,L-DAP) to meso-diaminopimelate (meso-DAP), a precursor of L-lysine and an essential component of the bacterial peptidoglycan. The sequence is that of Diaminopimelate epimerase from Afipia carboxidovorans (strain ATCC 49405 / DSM 1227 / KCTC 32145 / OM5) (Oligotropha carboxidovorans).